The chain runs to 312 residues: Putative S-adenosyl-L-methionine-dependent methyltransferase Mkms_0097 (312 aa).

S-adenosyl-L-methionine is bound by residues Asp134 and 163 to 164; that span reads DL.

Belongs to the UPF0677 family.

Its function is as follows. Exhibits S-adenosyl-L-methionine-dependent methyltransferase activity. This chain is Putative S-adenosyl-L-methionine-dependent methyltransferase Mkms_0097, found in Mycobacterium sp. (strain KMS).